A 1390-amino-acid chain; its full sequence is ATPase family AAA domain-containing protein 2 (1390 aa).

A disordered region spans residues Arg-40 to Lys-63. Over residues Ala-42–Gly-57 the composition is skewed to low complexity. Phosphoserine is present on residues Ser-60 and Ser-61. Lys-125 participates in a covalent cross-link: Glycyl lysine isopeptide (Lys-Gly) (interchain with G-Cter in SUMO2). Phosphoserine occurs at positions 165 and 170. Residues Leu-216–Arg-380 form a disordered region. The span at Lys-223 to Glu-232 shows a compositional bias: basic and acidic residues. Over residues Ser-244–Glu-288 the composition is skewed to acidic residues. Lys-317 participates in a covalent cross-link: Glycyl lysine isopeptide (Lys-Gly) (interchain with G-Cter in SUMO2). A phosphoserine mark is found at Ser-327, Ser-337, Ser-342, and Ser-410. Residue Gly-467–Thr-474 coordinates ATP. A phosphoserine mark is found at Ser-746 and Ser-751. 2 coiled-coil regions span residues Leu-970 to Arg-994 and Tyr-1086 to Gly-1112. One can recognise a Bromo domain in the interval Glu-980–Glu-1092. The disordered stretch occupies residues His-1124–Lys-1163. Residue Lys-1128 forms a Glycyl lysine isopeptide (Lys-Gly) (interchain with G-Cter in SUMO2) linkage. Over residues Gly-1135–Lys-1148 the composition is skewed to basic and acidic residues. The residue at position 1139 (Ser-1139) is a Phosphoserine. Lys-1148 is covalently cross-linked (Glycyl lysine isopeptide (Lys-Gly) (interchain with G-Cter in SUMO2)). A phosphothreonine mark is found at Thr-1149, Thr-1152, and Thr-1176. The segment covering Thr-1149–Ala-1160 has biased composition (polar residues). The tract at residues Arg-1181 to Asn-1242 is disordered. Over residues Gln-1185–Ser-1200 the composition is skewed to basic and acidic residues. Phosphoserine is present on residues Ser-1200, Ser-1233, and Ser-1235. The span at Gln-1229–Asn-1242 shows a compositional bias: polar residues. A Glycyl lysine isopeptide (Lys-Gly) (interchain with G-Cter in SUMO2) cross-link involves residue Lys-1236. Phosphoserine occurs at positions 1243 and 1302. Residue Thr-1323 is modified to Phosphothreonine.

The protein belongs to the AAA ATPase family. In terms of assembly, interacts with ESR1 and NCOA3 and these interactions are enhanced by estradiol. Interacts with acetylated lysine residues on histone H1.4, H2A, H2B and H3 (in vitro). As to expression, highly expressed in estrogen receptor positive breast tumors and in osteosarcoma tumors.

Its subcellular location is the nucleus. It carries out the reaction ATP + H2O = ADP + phosphate + H(+). Functionally, may be a transcriptional coactivator of the nuclear receptor ESR1 required to induce the expression of a subset of estradiol target genes, such as CCND1, MYC and E2F1. May play a role in the recruitment or occupancy of CREBBP at some ESR1 target gene promoters. May be required for histone hyperacetylation. Involved in the estrogen-induced cell proliferation and cell cycle progression of breast cancer cells. The protein is ATPase family AAA domain-containing protein 2 (ATAD2) of Homo sapiens (Human).